Consider the following 311-residue polypeptide: Beta-lactamase (311 aa).

Residues 1 to 34 (MRLTQAPPSRRTLMTLGAGATMAALLPAGGAAYA) constitute a signal peptide (tat-type signal). The active-site Acyl-ester intermediate is the S87. 255–257 (KTG) provides a ligand contact to substrate.

The protein belongs to the class-A beta-lactamase family. In terms of processing, predicted to be exported by the Tat system. The position of the signal peptide cleavage has not been experimentally proven.

It catalyses the reaction a beta-lactam + H2O = a substituted beta-amino acid. This is Beta-lactamase (bla) from Kitasatospora aureofaciens (Streptomyces aureofaciens).